The primary structure comprises 375 residues: Succinyl-diaminopimelate desuccinylase (375 aa).

A Zn(2+)-binding site is contributed by H66. D68 is an active-site residue. D99 contacts Zn(2+). The active-site Proton acceptor is the E133. The Zn(2+) site is built by E134, E162, and H348.

The protein belongs to the peptidase M20A family. DapE subfamily. As to quaternary structure, homodimer. Requires Zn(2+) as cofactor. The cofactor is Co(2+).

The enzyme catalyses N-succinyl-(2S,6S)-2,6-diaminopimelate + H2O = (2S,6S)-2,6-diaminopimelate + succinate. Its pathway is amino-acid biosynthesis; L-lysine biosynthesis via DAP pathway; LL-2,6-diaminopimelate from (S)-tetrahydrodipicolinate (succinylase route): step 3/3. Catalyzes the hydrolysis of N-succinyl-L,L-diaminopimelic acid (SDAP), forming succinate and LL-2,6-diaminopimelate (DAP), an intermediate involved in the bacterial biosynthesis of lysine and meso-diaminopimelic acid, an essential component of bacterial cell walls. This chain is Succinyl-diaminopimelate desuccinylase, found in Stenotrophomonas maltophilia (strain R551-3).